We begin with the raw amino-acid sequence, 212 residues long: Claudin-7-A (212 aa).

The Cytoplasmic segment spans residues 1–7 (MANSGVQ). Residues 8–28 (LLGFGLSLIGIIGLIVGTILP) traverse the membrane as a helical segment. Topologically, residues 29–81 (QWKMSAYVGDSIITAVATYQGLWMSCAFQSTGQLQCKIYDSILQLDSDLQATR) are extracellular. A helical transmembrane segment spans residues 82-102 (ALMIVGIIVSIAGLGVASIGM). At 103-119 (KCTTCGADDKVRKTRTA) the chain is on the cytoplasmic side. The helical transmembrane segment at 120 to 140 (MTGGIILLVGALCAVVACSWF) threads the bilayer. At 141-162 (AHNVIRAFYNPFTPVNTKFEFG) the chain is on the extracellular side. Residues 163–183 (AAIFIAWGGSFLDVLGGAMLA) form a helical membrane-spanning segment. Residues 184–212 (ASCPRSKQVSKYPKSNSTRSANGSNKEYV) lie on the Cytoplasmic side of the membrane. The interval 191 to 212 (QVSKYPKSNSTRSANGSNKEYV) is disordered.

The protein belongs to the claudin family.

Its subcellular location is the cell junction. The protein localises to the tight junction. It localises to the cell membrane. In terms of biological role, plays a major role in tight junction-specific obliteration of the intercellular space. This is Claudin-7-A from Danio rerio (Zebrafish).